The primary structure comprises 211 residues: Troponin I, cardiac muscle (211 aa).

The tract at residues 1–23 is disordered; that stretch reads MADESGDAAGCPPPAPAPIRRQS. Alanine 2 bears the N-acetylalanine mark. Serine 5 carries the post-translational modification Phosphoserine. Phosphoserine; by PKA and PKD/PRKD1 is present on residues serine 23 and serine 24. Residue tyrosine 27 is modified to Phosphotyrosine. Phosphothreonine; by STK4/MST1 is present on threonine 32. The tract at residues 33–80 is involved in binding TNC; it reads EPHAKKKSKISASRKLQLKTLMLQIAKQELEREAEERRGEKGRALSTR. Residues serine 43 and serine 45 each carry the phosphoserine; by PKC/PRKCE modification. Position 52 is a phosphothreonine; by STK4/MST1 (threonine 52). Serine 78 carries the post-translational modification Phosphoserine. Threonine 79 carries the post-translational modification Phosphothreonine. Residues threonine 130 and threonine 144 each carry the phosphothreonine; by STK4/MST1 modification. Residues 130 to 150 are involved in binding TNC and actin; the sequence is TQKIFDLRGKFKRPTLRRVRI. Serine 151 is modified (phosphoserine; by PAK3). Serine 167 bears the Phosphoserine mark. Residue threonine 182 is modified to Phosphothreonine. Serine 200 is subject to Phosphoserine.

It belongs to the troponin I family. As to quaternary structure, binds to actin and tropomyosin. Interacts with TRIM63. Interacts with STK4/MST1. Phosphorylated at Ser-23 and Ser-24 by PRKD1; phosphorylation reduces myofilament calcium sensitivity. Phosphorylated preferentially at Thr-32. Phosphorylation by STK4/MST1 alters its binding affinity to TNNC1 (cardiac Tn-C) and TNNT2 (cardiac Tn-T). Phosphorylated at Ser-43 and Ser-45 by PRKCE; phosphorylation increases myocardium contractile dysfunction.

Its function is as follows. Troponin I is the inhibitory subunit of troponin, the thin filament regulatory complex which confers calcium-sensitivity to striated muscle actomyosin ATPase activity. The sequence is that of Troponin I, cardiac muscle (TNNI3) from Canis lupus familiaris (Dog).